Here is a 318-residue protein sequence, read N- to C-terminus: Methionyl-tRNA formyltransferase (318 aa).

Position 110–113 (110–113 (SLLP)) interacts with (6S)-5,6,7,8-tetrahydrofolate.

Belongs to the Fmt family.

It carries out the reaction L-methionyl-tRNA(fMet) + (6R)-10-formyltetrahydrofolate = N-formyl-L-methionyl-tRNA(fMet) + (6S)-5,6,7,8-tetrahydrofolate + H(+). Functionally, attaches a formyl group to the free amino group of methionyl-tRNA(fMet). The formyl group appears to play a dual role in the initiator identity of N-formylmethionyl-tRNA by promoting its recognition by IF2 and preventing the misappropriation of this tRNA by the elongation apparatus. This is Methionyl-tRNA formyltransferase from Lacticaseibacillus paracasei (strain ATCC 334 / BCRC 17002 / CCUG 31169 / CIP 107868 / KCTC 3260 / NRRL B-441) (Lactobacillus paracasei).